The chain runs to 180 residues: ATP-dependent protease subunit HslV (180 aa).

Residue Thr-8 is part of the active site. Na(+)-binding residues include Ser-165, Cys-168, and Thr-171.

It belongs to the peptidase T1B family. HslV subfamily. A double ring-shaped homohexamer of HslV is capped on each side by a ring-shaped HslU homohexamer. The assembly of the HslU/HslV complex is dependent on binding of ATP.

It is found in the cytoplasm. It carries out the reaction ATP-dependent cleavage of peptide bonds with broad specificity.. With respect to regulation, allosterically activated by HslU binding. Its function is as follows. Protease subunit of a proteasome-like degradation complex believed to be a general protein degrading machinery. The polypeptide is ATP-dependent protease subunit HslV (Staphylococcus saprophyticus subsp. saprophyticus (strain ATCC 15305 / DSM 20229 / NCIMB 8711 / NCTC 7292 / S-41)).